The primary structure comprises 1443 residues: Lysophospholipase NTE1 (1443 aa).

Residues 1-59 lie on the Lumenal side of the membrane; it reads MEEELAIEDLPRLTGTVSLNNGLLHSIYNETTVFKILRWSLVEIPKYILKLMSKNLEIN. Residues 60-80 traverse the membrane as a helical segment; that stretch reads LNVSSILIITLLIAAGILVIV. Residues 81 to 1443 are Cytoplasmic-facing; the sequence is RYKFLTGYSE…RIKMYRRNTM (1363 aa). Polar residues predominate over residues 103-118; it reads ALGQQSTNYPKSTSSG. 2 disordered regions span residues 103–122 and 199–251; these read ALGQQSTNYPKSTSSGLFVE and KYDE…GKMH. A compositionally biased stretch (acidic residues) spans 210-235; it reads EGEEADEDDEEEEKEVGDDGDDEMDV. Residues 619–750 and 746–871 each bind a nucleoside 3',5'-cyclic phosphate; these read LYKR…LKSL and KLKS…VASK. A PNPLA domain is found at 1136 to 1300; the sequence is LVLGGGGSRG…LDNLPVMEMK (165 aa). The GXGXXG motif lies at 1140–1145; that stretch reads GGGSRG. The short motif at 1167-1171 is the GXSXG element; sequence GTSIG. S1169 serves as the catalytic Nucleophile. The active-site Proton acceptor is the D1287. The DGA/G motif lies at 1287-1289; that stretch reads DGG.

This sequence belongs to the NTE family.

Its subcellular location is the endoplasmic reticulum membrane. It carries out the reaction a 1-acyl-sn-glycero-3-phosphocholine + H2O = sn-glycerol 3-phosphocholine + a fatty acid + H(+). Inhibited by organophosphorus esters. Functionally, intracellular phospholipase B that catalyzes the double deacylation of phosphatidylcholine (PC) to glycerophosphocholine (GroPCho). Plays an important role in membrane lipid homeostasis. Responsible for the rapid PC turnover in response to inositol, elevated temperatures, or when choline is present in the growth medium. This chain is Lysophospholipase NTE1 (NTE1), found in Lodderomyces elongisporus (strain ATCC 11503 / CBS 2605 / JCM 1781 / NBRC 1676 / NRRL YB-4239) (Yeast).